Here is a 441-residue protein sequence, read N- to C-terminus: 3-phosphoshikimate 1-carboxyvinyltransferase (441 aa).

The 3-phosphoshikimate site is built by lysine 22, serine 23, and arginine 27. Position 22 (lysine 22) interacts with phosphoenolpyruvate. 2 residues coordinate phosphoenolpyruvate: glycine 95 and arginine 123. 4 residues coordinate 3-phosphoshikimate: serine 168, glutamine 170, aspartate 321, and lysine 348. Residue glutamine 170 coordinates phosphoenolpyruvate. Aspartate 321 serves as the catalytic Proton acceptor. Phosphoenolpyruvate-binding residues include arginine 352 and arginine 400.

This sequence belongs to the EPSP synthase family. As to quaternary structure, monomer.

The protein localises to the cytoplasm. It catalyses the reaction 3-phosphoshikimate + phosphoenolpyruvate = 5-O-(1-carboxyvinyl)-3-phosphoshikimate + phosphate. The protein operates within metabolic intermediate biosynthesis; chorismate biosynthesis; chorismate from D-erythrose 4-phosphate and phosphoenolpyruvate: step 6/7. Catalyzes the transfer of the enolpyruvyl moiety of phosphoenolpyruvate (PEP) to the 5-hydroxyl of shikimate-3-phosphate (S3P) to produce enolpyruvyl shikimate-3-phosphate and inorganic phosphate. The chain is 3-phosphoshikimate 1-carboxyvinyltransferase from Novosphingobium aromaticivorans (strain ATCC 700278 / DSM 12444 / CCUG 56034 / CIP 105152 / NBRC 16084 / F199).